A 393-amino-acid chain; its full sequence is Glucose-1-phosphate adenylyltransferase (393 aa).

Residues tyrosine 105, glycine 170, 185 to 186 (EK), and serine 196 each bind alpha-D-glucose 1-phosphate.

This sequence belongs to the bacterial/plant glucose-1-phosphate adenylyltransferase family. In terms of assembly, homotetramer.

It catalyses the reaction alpha-D-glucose 1-phosphate + ATP + H(+) = ADP-alpha-D-glucose + diphosphate. It participates in glycan biosynthesis; glycogen biosynthesis. In terms of biological role, involved in the biosynthesis of ADP-glucose, a building block required for the elongation reactions to produce glycogen. Catalyzes the reaction between ATP and alpha-D-glucose 1-phosphate (G1P) to produce pyrophosphate and ADP-Glc. The protein is Glucose-1-phosphate adenylyltransferase of Clostridium perfringens (strain 13 / Type A).